We begin with the raw amino-acid sequence, 353 residues long: DNA integrity scanning protein DisA (353 aa).

Positions 6 to 144 (DKELMNILKI…GGIKYVLRDS (139 aa)) constitute a DAC domain. ATP-binding positions include Gly73, Leu91, and 104–108 (TRHRT).

The protein belongs to the DisA family. As to quaternary structure, homooctamer. It depends on Mg(2+) as a cofactor.

It catalyses the reaction 2 ATP = 3',3'-c-di-AMP + 2 diphosphate. In terms of biological role, participates in a DNA-damage check-point that is active prior to asymmetric division when DNA is damaged. DisA forms globular foci that rapidly scan along the chromosomes during sporulation, searching for lesions. When a lesion is present, DisA pauses at the lesion site. This triggers a cellular response that culminates in a temporary block in sporulation initiation. Its function is as follows. Also has diadenylate cyclase activity, catalyzing the condensation of 2 ATP molecules into cyclic di-AMP (c-di-AMP). c-di-AMP acts as a signaling molecule that couples DNA integrity with progression of sporulation. The rise in c-di-AMP level generated by DisA while scanning the chromosome, operates as a positive signal that advances sporulation; upon encountering a lesion, the DisA focus arrests at the damaged site and halts c-di-AMP synthesis. This Clostridium botulinum (strain Okra / Type B1) protein is DNA integrity scanning protein DisA.